A 151-amino-acid chain; its full sequence is UPF0178 protein Desal_2673 (151 aa).

It belongs to the UPF0178 family.

This Maridesulfovibrio salexigens (strain ATCC 14822 / DSM 2638 / NCIMB 8403 / VKM B-1763) (Desulfovibrio salexigens) protein is UPF0178 protein Desal_2673.